The primary structure comprises 449 residues: MGRLFGTDGVRGVANTELTADLAFKLGRAGAFVLTEGTHKPKILVGMDTRISGDMLEAALVAGILSVGAEAICVGVVPTPAIAYLTRKYKADAGVVISASHNPVEYNGIKFFNKNGYKLKDELEDRIQSIIENNFEGVPSPTGENLGRKITCESAIDDYVEFAKSTIDVDLKGLKIALDCANGASYKTSVETFRELGAEVVVINNDPDGVNINKNCGSTHPEELMDYVVKQGCDLGLAFDGDADRCLAVDEKGNLIDGDFIMTICGKHLKDQGKLKDNMVVVTVMSNLGLSLAFDKENISTIKTKVGDRYVLEEMVKDGYKLGGEQSGHIIFLDYNTTGDGLVTGLQIASIVKETGKTLSELASIMTKLPQVLVNAKVPNNMKDIHEKDAEIAEEIKKIEEKLNGCGRVLIRPSGTEPLVRVMLEGENQEELDKIAHALAKMIEEKANA.

Ser-100 (phosphoserine intermediate) is an active-site residue. Residues Ser-100, Asp-240, Asp-242, and Asp-244 each contribute to the Mg(2+) site. Phosphoserine is present on Ser-100.

It belongs to the phosphohexose mutase family. Requires Mg(2+) as cofactor. Activated by phosphorylation.

The enzyme catalyses alpha-D-glucosamine 1-phosphate = D-glucosamine 6-phosphate. Its function is as follows. Catalyzes the conversion of glucosamine-6-phosphate to glucosamine-1-phosphate. The sequence is that of Phosphoglucosamine mutase from Clostridium novyi (strain NT).